A 345-amino-acid polypeptide reads, in one-letter code: GTPase Obg (345 aa).

Residues 1–159 (MRFIDEASIT…FHLKLELKLL (159 aa)) enclose the Obg domain. Residues 160-329 (ADVGIVGLPN…LIQILARQIA (170 aa)) enclose the OBG-type G domain. GTP contacts are provided by residues 166 to 173 (GLPNAGKS), 191 to 195 (FTTLT), 213 to 216 (DIPG), 283 to 286 (NKID), and 310 to 312 (SAA). Residues Ser173 and Thr193 each coordinate Mg(2+).

Belongs to the TRAFAC class OBG-HflX-like GTPase superfamily. OBG GTPase family. Monomer. It depends on Mg(2+) as a cofactor.

The protein localises to the cytoplasm. Functionally, an essential GTPase which binds GTP, GDP and possibly (p)ppGpp with moderate affinity, with high nucleotide exchange rates and a fairly low GTP hydrolysis rate. Plays a role in control of the cell cycle, stress response, ribosome biogenesis and in those bacteria that undergo differentiation, in morphogenesis control. In Desulforapulum autotrophicum (strain ATCC 43914 / DSM 3382 / VKM B-1955 / HRM2) (Desulfobacterium autotrophicum), this protein is GTPase Obg.